A 229-amino-acid chain; its full sequence is Ribosome maturation factor RimM (229 aa).

The tract at residues 1-37 is disordered; the sequence is MAGHDSGNAKRGRSPSFGVFVRKPVERTSAKGTSDGA. Residues 148–229 enclose the PRC barrel domain; sequence ADEFYWVDLI…RVVVDWEADY (82 aa).

The protein belongs to the RimM family. As to quaternary structure, binds ribosomal protein uS19.

The protein resides in the cytoplasm. In terms of biological role, an accessory protein needed during the final step in the assembly of 30S ribosomal subunit, possibly for assembly of the head region. Essential for efficient processing of 16S rRNA. May be needed both before and after RbfA during the maturation of 16S rRNA. It has affinity for free ribosomal 30S subunits but not for 70S ribosomes. In Burkholderia pseudomallei (strain 668), this protein is Ribosome maturation factor RimM.